Here is a 210-residue protein sequence, read N- to C-terminus: MSTKVPIYLKRGSRKGKKEKLRDLLSSDMISPPLGDFRHTIHIGSGGGSDMFGDISFLQGKFHLLPGTMVEGPEEDGTFDLPFQFTRTATVCGRELPDGPSPLLKNAISLPVIGGPQALTLPTAQAPPKPPRLHLETPQPSPQEGGSVDIWRIPETGSPNSGLTPESGAEEPFLSNASSLLSLHVDLGPSILDDVLQIMDQDLDSMQIPT.

At Ser-2 the chain carries N-acetylserine. One can recognise a CRIB domain in the interval 30-44 (ISPPLGDFRHTIHIG). Phosphoserine is present on residues Ser-31, Ser-101, and Ser-141. Residues 122–171 (PTAQAPPKPPRLHLETPQPSPQEGGSVDIWRIPETGSPNSGLTPESGAEE) form a disordered region.

This sequence belongs to the BORG/CEP family. As to quaternary structure, interacts with RHOQ and CDC42 in a GTP-dependent manner, and with SEPT7. In terms of tissue distribution, highly expressed in the heart. Weakly expressed in the pancreas and liver.

The protein resides in the endomembrane system. It localises to the cytoplasm. It is found in the cytoskeleton. Functionally, probably involved in the organization of the actin cytoskeleton. May act downstream of CDC42 to induce actin filament assembly leading to cell shape changes. Induces pseudopodia formation in fibroblasts in a CDC42-dependent manner. The polypeptide is Cdc42 effector protein 2 (CDC42EP2) (Homo sapiens (Human)).